Consider the following 419-residue polypeptide: Peroxisomal membrane protein PMP47B (419 aa).

3 Solcar repeats span residues 6-120 (YDDL…TGKT), 142-230 (LSVW…LKSF), and 239-369 (VTPV…LLIL). A helical transmembrane segment spans residues 12-32 (AFAGAGGGLLSMTLTYPLVTL). Over residues 44–53 (KNEEEEKENS) the composition is skewed to basic and acidic residues. The segment at 44–69 (KNEEEEKENSNEDGSLSPKSSNTSNI) is disordered. The span at 56–69 (DGSLSPKSSNTSNI) shows a compositional bias: polar residues. Transmembrane regions (helical) follow at residues 98–118 (SALFGIAVTNFVYYYFYELTG), 204–224 (FTGIVPALFLVLNPIIQYTIF), and 245–265 (LLLGAFGKLIATIITYPYITL). The disordered stretch occupies residues 274–305 (MTENNEDSEKERTDSVQSLPEDGSDEDNSKEN). Transmembrane regions (helical) follow at residues 310–330 (TINKIISKLPSPIVSMFIIGY) and 349–369 (LLQSILNAAFLFYFKEELLIL).

Belongs to the mitochondrial carrier (TC 2.A.29) family.

The protein localises to the peroxisome membrane. In terms of biological role, may have transport activity. In Candida boidinii (Yeast), this protein is Peroxisomal membrane protein PMP47B (PMP47B).